Here is a 143-residue protein sequence, read N- to C-terminus: Spliceosomal protein DIB1 (143 aa).

Ala2 is modified (N-acetylalanine).

Belongs to the DIM1 family. Component of the U4/U6-U5 tri-snRNP complex composed of the U4, U6 and U5 snRNAs and at least PRP3, PRP4, PRP6, PRP8, PRP18, PRP31, PRP38, SNU13, SNU23, SNU66, SNU114, SPP381, SMB1, SMD1, SMD2, SMD3, SMX2, SMX3, LSM2, LSM3, LSM4, LSM5, LSM6, LSM7, LSM8, BRR2 and DIB1.

It localises to the nucleus. Essential role in pre-mRNA splicing. Also essential for entry into mitosis (G2/M progression) as well as for chromosome segregation during mitosis. This is Spliceosomal protein DIB1 (DIB1) from Saccharomyces cerevisiae (strain ATCC 204508 / S288c) (Baker's yeast).